We begin with the raw amino-acid sequence, 74 residues long: ATP synthase subunit 9, mitochondrial (74 aa).

Transmembrane regions (helical) follow at residues 8–28 (MGAGAATIALAGAAIGIGNVF) and 50–70 (ILGFALTEAIALFALMMAFLI).

It belongs to the ATPase C chain family. F-type ATPases have 2 components, CF(1) - the catalytic core - and CF(0) - the membrane proton channel. CF(1) has five subunits: alpha(3), beta(3), gamma(1), delta(1), epsilon(1). CF(0) has three main subunits: a, b and c.

The protein resides in the mitochondrion membrane. This protein is one of the chains of the nonenzymatic membrane component (F0) of mitochondrial ATPase. The chain is ATP synthase subunit 9, mitochondrial (ATP9) from Solanum lycopersicum (Tomato).